The sequence spans 310 residues: Junctional adhesion molecule C (310 aa).

A signal peptide spans 1 to 31; that stretch reads MALSRRLRLRLCARLPDFFLLLLFRGCVIEA. Residues 32 to 241 are Extracellular-facing; the sequence is VNLKSSNRNP…GQDMEVYDLN (210 aa). The Ig-like V-type domain occupies 35 to 127; the sequence is KSSNRNPVVH…VALNDRKEVD (93 aa). 2 disulfide bridges follow: C53–C115 and C160–C219. N104 and N192 each carry an N-linked (GlcNAc...) asparagine glycan. In terms of domain architecture, Ig-like C2-type spans 139-236; the sequence is PVAPVCRVPK…AARCEGQDME (98 aa). Residues 242 to 262 traverse the membrane as a helical segment; sequence IAGIIGGVLVVLIVLAVITMG. Residues 263–310 are Cytoplasmic-facing; that stretch reads ICCAYRRGCFISSKQDGESYKSPGKHEGVNYIRTSEEGDFRHKSSFVI. 2 S-palmitoyl cysteine lipidation sites follow: C264 and C265.

Belongs to the immunoglobulin superfamily. As to quaternary structure, interacts with ITGAM. Interacts with GORASP2. In terms of processing, proteolytically cleaved from endothelial cells surface into a soluble form by ADAM10 and ADAM17; the release of soluble JAM3 is increased by pro-inflammatory factors. S-palmitoylated by ZDHHC7. S-palmitoylation promotes expression at tight junctions.

The protein resides in the cell membrane. Its subcellular location is the cell junction. The protein localises to the desmosome. It localises to the tight junction. It is found in the secreted. Junctional adhesion protein that mediates heterotypic cell-cell interactions with its cognate receptor JAM2 to regulate different cellular processes. Plays a role in homing and mobilization of hematopoietic stem and progenitor cells within the bone marrow. At the surface of bone marrow stromal cells, it contributes to the retention of the hematopoietic stem and progenitor cells expressing JAM3. Plays a central role in leukocytes extravasation by facilitating transmigration through the endothelium. Plays a role in spermatogenesis where JAM2 and JAM3, which are respectively expressed by Sertoli and germ cells, mediate an interaction between both cell types and play an essential role in the anchorage of germ cells onto Sertoli cells and the assembly of cell polarity complexes during spermatid differentiation. Also functions as a counter-receptor for ITGAM, mediating leukocyte-platelet interactions and is involved in the regulation of transepithelial migration of polymorphonuclear neutrophils (PMN). Plays a role in angiogenesis. Plays a role in the regulation of cell migration. During myogenesis, it is involved in myocyte fusion. Functionally, promotes chemotaxis of vascular endothelial cells and stimulates angiogenesis. This Rattus norvegicus (Rat) protein is Junctional adhesion molecule C (Jam3).